The chain runs to 183 residues: Acidic proline-rich protein HP43A (183 aa).

An N-terminal signal peptide occupies residues 1–14; that stretch reads MLVVLLTAALLAEH. Positions 22–183 are disordered; it reads ISQLSEEEQQ…QGSEEQSTSL (162 aa). Over residues 52–65 the composition is skewed to acidic residues; sequence SDEEGDDDGEEDGN. Repeat copies occupy residues 81 to 100, 101 to 120, 121 to 140, 141 to 160, and 161 to 180. Positions 86–183 are enriched in low complexity; it reads GNQQGPPQQE…QGSEEQSTSL (98 aa).

It localises to the secreted. The protein is Acidic proline-rich protein HP43A (H29) of Mesocricetus auratus (Golden hamster).